The sequence spans 143 residues: AP-4 complex subunit sigma (143 aa).

This sequence belongs to the adaptor complexes small subunit family. As to quaternary structure, adaptor protein complex 4 (AP-4) is a heterotetramer composed of two large adaptins (epsilon-type subunit and beta-type subunit), a medium adaptin (mu-type subunit) and a small adaptin (sigma-type subunit). Interacts with EHD2.

It localises to the golgi apparatus. Its subcellular location is the trans-Golgi network. It is found in the membrane. The protein localises to the coated pit. Functionally, subunit of novel type of clathrin- or non-clathrin-associated protein coat involved in targeting proteins from the trans-Golgi network (TGN) to the endosomal-lysosomal system. The protein is AP-4 complex subunit sigma of Arabidopsis thaliana (Mouse-ear cress).